The following is a 377-amino-acid chain: UPF0754 membrane protein lwe2241 (377 aa).

2 helical membrane-spanning segments follow: residues Met-1–Thr-21 and Tyr-357–Ile-377.

It belongs to the UPF0754 family.

The protein resides in the cell membrane. This Listeria welshimeri serovar 6b (strain ATCC 35897 / DSM 20650 / CCUG 15529 / CIP 8149 / NCTC 11857 / SLCC 5334 / V8) protein is UPF0754 membrane protein lwe2241.